A 320-amino-acid polypeptide reads, in one-letter code: o-succinylbenzoate synthase (320 aa).

The Proton donor role is filled by Lys133. Mg(2+) contacts are provided by Asp161, Glu190, and Asp213. The active-site Proton acceptor is Lys235.

Belongs to the mandelate racemase/muconate lactonizing enzyme family. MenC type 1 subfamily. A divalent metal cation serves as cofactor.

It carries out the reaction (1R,6R)-6-hydroxy-2-succinyl-cyclohexa-2,4-diene-1-carboxylate = 2-succinylbenzoate + H2O. Its pathway is quinol/quinone metabolism; 1,4-dihydroxy-2-naphthoate biosynthesis; 1,4-dihydroxy-2-naphthoate from chorismate: step 4/7. The protein operates within quinol/quinone metabolism; menaquinone biosynthesis. Converts 2-succinyl-6-hydroxy-2,4-cyclohexadiene-1-carboxylate (SHCHC) to 2-succinylbenzoate (OSB). This Escherichia coli O9:H4 (strain HS) protein is o-succinylbenzoate synthase.